The following is a 272-amino-acid chain: Shikimate dehydrogenase (NADP(+)) (272 aa).

Shikimate-binding positions include 14–16 (SKS) and T61. Catalysis depends on K65, which acts as the Proton acceptor. E77 contacts NADP(+). 2 residues coordinate shikimate: N86 and D102. Residues 126-130 (GAGGA), 149-154 (NRTVSR), and M213 contribute to the NADP(+) site. Residue Y215 coordinates shikimate. An NADP(+)-binding site is contributed by G237.

This sequence belongs to the shikimate dehydrogenase family. Homodimer.

The catalysed reaction is shikimate + NADP(+) = 3-dehydroshikimate + NADPH + H(+). It functions in the pathway metabolic intermediate biosynthesis; chorismate biosynthesis; chorismate from D-erythrose 4-phosphate and phosphoenolpyruvate: step 4/7. Functionally, involved in the biosynthesis of the chorismate, which leads to the biosynthesis of aromatic amino acids. Catalyzes the reversible NADPH linked reduction of 3-dehydroshikimate (DHSA) to yield shikimate (SA). The sequence is that of Shikimate dehydrogenase (NADP(+)) from Escherichia coli (strain SMS-3-5 / SECEC).